Reading from the N-terminus, the 2139-residue chain is Voltage-dependent L-type calcium channel subunit alpha-1C (2139 aa).

Positions 1–20 are disordered; sequence MVNENTRMYVPEENHQGSNY. Over 1–124 the chain is Cytoplasmic; sequence MVNENTRMYV…RACISIVEWK (124 aa). Residues 47 to 68 are calmodulin-binding; it reads GAALSWQAAIDAARQAKLMGSA. A disordered region spans residues 73 to 98; the sequence is ISTVSSTQRKRQQYGKPKKQGGTTAT. Residues 80-91 are compositionally biased toward basic residues; that stretch reads QRKRQQYGKPKK. An I repeat occupies 111–408; sequence NPIRRACISI…LVLGVLSGEF (298 aa). Residues 125 to 143 form a helical membrane-spanning segment; the sequence is PFEIIILLTIFANCVALAI. Residues 144-158 lie on the Extracellular side of the membrane; sequence YIPFPEDDSNATNSN. Asn153 is a glycosylation site (N-linked (GlcNAc...) asparagine). Residues 159-179 form a helical membrane-spanning segment; sequence LERVEYLFLIIFTVEAFLKVI. Over 180–188 the chain is Cytoplasmic; that stretch reads AYGLLFHPN. Residues 189 to 209 form a helical membrane-spanning segment; sequence AYLRNGWNLLDFIIVVVGLFS. Residues 210–232 lie on the Extracellular side of the membrane; sequence AILEQATKADGANALGGKGAGFD. A helical transmembrane segment spans residues 233 to 251; it reads VKALRAFRVLRPLRLVSGV. Topologically, residues 252 to 268 are cytoplasmic; sequence PSLQVVLNSIIKAMVPL. The helical transmembrane segment at 269-290 threads the bilayer; it reads LHIALLVLFVIIIYAIIGLELF. At 291–350 the chain is on the extracellular side; that stretch reads MGKMHKTCYNQEGIIDVPAEEDPSPCALETGHGRQCQNGTVCKPGWDGPKHGITNFDNFA. Intrachain disulfides connect Cys298-Cys326 and Cys316-Cys332. A glycan (N-linked (GlcNAc...) asparagine) is linked at Asn328. The segment at residues 351–372 is an intramembrane region (pore-forming); that stretch reads FAMLTVFQCITMEGWTDVLYWM. The Selectivity filter of repeat I motif lies at 361–364; sequence TMEG. Glu363 is a binding site for Ca(2+). Residues 373–380 lie on the Extracellular side of the membrane; the sequence is QDAMGYEL. A helical membrane pass occupies residues 381-401; it reads PWVYFVSLVIFGSFFVLNLVL. Over 402-524 the chain is Cytoplasmic; the sequence is GVLSGEFSKE…RKCRAAVKSN (123 aa). Positions 428–445 are AID/alpha-interaction domain; mediates interaction with the beta subunit; it reads QQLEEDLKGYLDWITQAE. The disordered stretch occupies residues 449 to 481; sequence PENEDEGMDEDKPRNMSMPTSETESVNTENVAG. The span at 465–478 shows a compositional bias: polar residues; it reads SMPTSETESVNTEN. A Phosphoserine modification is found at Ser469. A Phosphothreonine modification is found at Thr476. An II repeat occupies 510-756; that stretch reads NRFCRRKCRA…VFLAIAVDNL (247 aa). A helical transmembrane segment spans residues 525 to 543; it reads VFYWLVIFLVFLNTLTIAS. Over 544 to 554 the chain is Extracellular; that stretch reads EHYNQPHWLTE. The chain crosses the membrane as a helical span at residues 555-575; sequence VQDTANKALLALFTAEMLLKM. Residues 576–586 lie on the Cytoplasmic side of the membrane; sequence YSLGLQAYFVS. A helical membrane pass occupies residues 587 to 606; that stretch reads LFNRFDCFIVCGGILETILV. Over 607–615 the chain is Extracellular; it reads ETKIMSPLG. Residues 616–634 traverse the membrane as a helical segment; the sequence is ISVLRCVRLLRIFKITRYW. Residues 635–653 are Cytoplasmic-facing; sequence NSLSNLVASLLNSVRSIAS. A helical transmembrane segment spans residues 654–673; the sequence is LLLLLFLFIIIFSLLGMQLF. Topologically, residues 674–693 are extracellular; the sequence is GGKFNFDEMQTRRSTFDNFP. The segment at residues 694–715 is an intramembrane region (pore-forming); that stretch reads QSLLTVFQILTGEDWNSVMYDG. Residues 704 to 707 carry the Selectivity filter of repeat II motif; sequence TGED. Glu706 is a Ca(2+) binding site. Residues 716-725 are Extracellular-facing; that stretch reads IMAYGGPSFP. A helical transmembrane segment spans residues 726 to 745; that stretch reads GMLVCIYFIILFICGNYILL. Topologically, residues 746-900 are cytoplasmic; sequence NVFLAIAVDN…LQCHRIVNDT (155 aa). Residues 764–861 form a disordered region; the sequence is SAQKEEEEEK…EMPVGPRPRP (98 aa). Basic and acidic residues predominate over residues 783 to 806; sequence SPEKKQEVMEKPAVEESKEEKIEL. Ser808 and Ser815 each carry phosphoserine. The tract at residues 829 to 876 is interaction with STAC2; that stretch reads SENEDKSPHSNPDTAGEEDEEEPEMPVGPRPRPLSELHLKEKAVPMPE. Positions 843–852 are enriched in acidic residues; sequence AGEEDEEEPE. The III repeat unit spans residues 887–1169; it reads NRFRLQCHRI…IFVGFVIVTF (283 aa). A helical membrane pass occupies residues 901-919; that stretch reads IFTNLILFFILLSSISLAA. Residues 920–931 lie on the Extracellular side of the membrane; it reads EDPVQHTSFRNH. The chain crosses the membrane as a helical span at residues 932 to 951; sequence ILGNADYVFTSIFTLEIILK. The Cytoplasmic portion of the chain corresponds to 952-967; sequence MTAYGAFLHKGSFCRN. A helical membrane pass occupies residues 968–986; the sequence is YFNILDLLVVSVSLISFGI. Residues 987-993 are Extracellular-facing; it reads QSSAINV. A helical transmembrane segment spans residues 994 to 1012; that stretch reads VKILRVLRVLRPLRAINRA. Over 1013 to 1031 the chain is Cytoplasmic; sequence KGLKHVVQCVFVAIRTIGN. Residues 1032–1051 traverse the membrane as a helical segment; it reads IVIVTTLLQFMFACIGVQLF. At 1052–1101 the chain is on the extracellular side; it reads KGKLYTCSDSSKQTEAECKGNYITYKDGEVDHPIIQPRSWENSKFDFDNV. Cys1058 and Cys1069 form a disulfide bridge. The tract at residues 1089–1178 is dihydropyridine binding; it reads RSWENSKFDF…FQEQGEQEYK (90 aa). Positions 1102 to 1122 form an intramembrane region, pore-forming; that stretch reads LAAMMALFTVSTFEGWPELLY. A Selectivity filter of repeat III motif is present at residues 1113–1116; the sequence is TFEG. Ca(2+) is bound at residue Glu1115. The Extracellular segment spans residues 1123 to 1139; that stretch reads RSIDSHTEDKGPIYNYR. Residues 1140-1161 traverse the membrane as a helical segment; the sequence is VEISIFFIIYIIIIAFFMMNIF. Over 1162 to 1219 the chain is Cytoplasmic; sequence VGFVIVTFQEQGEQEYKNCELDKNQRQCVEYALKARPLRRYIPKNQHQYKVWYVVNST. The stretch at 1206–1479 is one IV repeat; it reads NQHQYKVWYV…LFVAVIMDNF (274 aa). The chain crosses the membrane as a helical span at residues 1220–1241; it reads YFEYLMFVLILLNTICLAMQHY. At 1242–1249 the chain is on the extracellular side; that stretch reads GQSCLFKI. Residues 1250–1271 traverse the membrane as a helical segment; that stretch reads AMNILNMLFTGLFTVEMILKLI. Topologically, residues 1272 to 1281 are cytoplasmic; it reads AFKPKGYFSD. Residues 1282–1301 form a helical membrane-spanning segment; it reads PWNVFDFLIVIGSIIDVILS. At 1302-1324 the chain is on the extracellular side; that stretch reads ETNPAEHTQCSPSMSAEENSRIS. The helical transmembrane segment at 1325–1343 threads the bilayer; it reads ITFFRLFRVMRLVKLLSRG. The Cytoplasmic portion of the chain corresponds to 1344 to 1361; that stretch reads EGIRTLLWTFIKSFQALP. Residues 1362–1382 traverse the membrane as a helical segment; the sequence is YVALLIVMLFFIYAVIGMQVF. The Extracellular segment spans residues 1383 to 1404; the sequence is GKIALNDTTEINRNNNFQTFPQ. Residue Asn1388 is glycosylated (N-linked (GlcNAc...) asparagine). Residues 1405–1423 constitute an intramembrane region (pore-forming); sequence AVLLLFRCATGEAWQDIML. A Selectivity filter of repeat IV motif is present at residues 1414-1417; the sequence is TGEA. At 1424–1451 the chain is on the extracellular side; that stretch reads ACMPGKKCAPESEPSNSTEGETPCGSSF. A dihydropyridine binding region spans residues 1430 to 1498; it reads KCAPESEPSN…LGPHHLDEFK (69 aa). Cys1431 and Cys1447 are oxidised to a cystine. Asn1439 carries an N-linked (GlcNAc...) asparagine glycan. Positions 1444 to 1486 are phenylalkylamine binding; the sequence is ETPCGSSFAVFYFISFYMLCAFLIINLFVAVIMDNFDYLTRDW. A helical membrane pass occupies residues 1452-1476; it reads AVFYFISFYMLCAFLIINLFVAVIM. Topologically, residues 1477-2139 are cytoplasmic; sequence DNFDYLTRDW…ADSRSYVSNL (663 aa). The tract at residues 1611–1638 is important for interaction with STAC1, STAC2 and STAC3; the sequence is DEVTVGKFYATFLIQEYFRKFKKRKEQG. The calmodulin-binding stretch occupies residues 1611 to 1644; it reads DEVTVGKFYATFLIQEYFRKFKKRKEQGLVGKPS. The interval 1617–1637 is calmodulin-binding IQ region; sequence KFYATFLIQEYFRKFKKRKEQ. Residues 1651-1670 form an important for localization in at the junctional membrane region; it reads LQAGLRTLHDIGPEIRRAIS. Residues Ser1670 and Ser1691 each carry the phosphoserine modification. Composition is skewed to polar residues over residues 1732–1741 and 1751–1763; these read KTGNNQADTE and STFT…STGS. The interval 1732–1773 is disordered; sequence KTGNNQADTESPSHEKLVDSTFTPSSYSSTGSNANINNANNT. The segment covering 1764 to 1773 has biased composition (low complexity); that stretch reads NANINNANNT. Ser1897 carries the phosphoserine; by PKA modification. Positions 1940–1966 are disordered; the sequence is RSHSPTTFPRPCPTPPVTPGSRGRPLR. A compositionally biased stretch (pro residues) spans 1947–1957; that stretch reads FPRPCPTPPVT.

The protein belongs to the calcium channel alpha-1 subunit (TC 1.A.1.11) family. CACNA1C subfamily. As to quaternary structure, component of a calcium channel complex consisting of a pore-forming alpha subunit (CACNA1C) and ancillary beta, gamma and delta subunits. The channel complex contains alpha, beta, gamma and delta subunits in a 1:1:1:1 ratio, i.e. it contains only one of each type of subunit. CACNA1C channel activity is modulated by ancillary subunits, such as CACNB1, CACNB2, CACNB3, CACNA2D1 and CACNA2D4. Interacts with the gamma subunits CACNG4, CACNG6, CACNG7 and CACNG8. Interacts with CACNB1. Interacts with CACNB2. Identified in a complex with CACNA2D4 and CACNB3. Interacts with CACNB3. Interacts with CACNA2D1. Interacts with CACNA2D4. Interacts with CALM1. Interacts (via the N-terminus and the C-terminal C and IQ motifs) with CABP1; this inhibits Ca(2+)-dependent channel inactivation. The binding via the C motif is calcium independent whereas the binding via IQ requires the presence of calcium and is mutually exclusive with calmodulin binding. The binding to the cytoplasmic N-terminal domain is calcium independent but is essential for the channel modulation. Interacts (via C-terminal CDB motif) with CABP5; in a calcium-dependent manner. Interacts with CIB1; the interaction increases upon cardiomyocytes hypertrophy. Interacts with STAC2 and STAC3; this inhibits channel inactivation. Post-translationally, phosphorylation by PKA at Ser-1897 activates the channel. Elevated levels of blood glucose lead to increased phosphorylation by PKA. In terms of tissue distribution, detected in embryonic heart. Detected in retina in rod bipolar cells. Detected in tibialis artery (at protein level). Detected in smooth muscle cells from tibialis artery and in mesenteric artery. High expression in heart, followed by brain and spinal cord.

The protein localises to the cell membrane. The protein resides in the sarcolemma. It localises to the perikaryon. It is found in the postsynaptic density membrane. Its subcellular location is the cell projection. The protein localises to the dendrite. The protein resides in the T-tubule. It catalyses the reaction Ca(2+)(in) = Ca(2+)(out). Its activity is regulated as follows. Inhibited by dihydropyridines (DHP), such as isradipine. Inhibited by nifedipine. Channel activity is regulated by Ca(2+) and calmodulin. Binding of STAC1, STAC2 or STAC3 to a region that overlaps with the calmodulin binding site inhibits channel inactivation by Ca(2+) and calmodulin. Binding of calmodulin or CABP1 at the same regulatory sites results in opposite effects on the channel function. Shear stress and pressure increases calcium channel activity. In terms of biological role, pore-forming, alpha-1C subunit of the voltage-gated calcium channel that gives rise to L-type calcium currents. Mediates influx of calcium ions into the cytoplasm, and thereby triggers calcium release from the sarcoplasm. Plays an important role in excitation-contraction coupling in the heart. Required for normal heart development and normal regulation of heart rhythm. Required for normal contraction of smooth muscle cells in blood vessels and in the intestine. Essential for normal blood pressure regulation via its role in the contraction of arterial smooth muscle cells. Long-lasting (L-type) calcium channels belong to the 'high-voltage activated' (HVA) group. This is Voltage-dependent L-type calcium channel subunit alpha-1C (Cacna1c) from Mus musculus (Mouse).